The chain runs to 464 residues: Cysteine--tRNA ligase (464 aa).

Zn(2+) is bound at residue Cys-28. The 'HIGH' region motif lies at 30-40; it reads ITAYDFCHIGH. Zn(2+) contacts are provided by Cys-210, His-235, and Glu-239. Residues 267–271 carry the 'KMSKS' region motif; sequence KMSKS. Lys-270 serves as a coordination point for ATP.

It belongs to the class-I aminoacyl-tRNA synthetase family. As to quaternary structure, monomer. Zn(2+) is required as a cofactor.

The protein localises to the cytoplasm. It carries out the reaction tRNA(Cys) + L-cysteine + ATP = L-cysteinyl-tRNA(Cys) + AMP + diphosphate. In Buchnera aphidicola subsp. Baizongia pistaciae (strain Bp), this protein is Cysteine--tRNA ligase.